Consider the following 155-residue polypeptide: Cytochrome c-type biogenesis protein CcmE (155 aa).

Over 1–8 (MNPRRKKR) the chain is Cytoplasmic. Residues 9–29 (LLITSLLAVALSLAVGLVLFA) traverse the membrane as a helical; Signal-anchor for type II membrane protein segment. The Periplasmic segment spans residues 30–155 (LQQNIDLFYT…GMDNFKANNK (126 aa)). His-131 and Tyr-135 together coordinate heme.

The protein belongs to the CcmE/CycJ family.

The protein localises to the cell inner membrane. In terms of biological role, heme chaperone required for the biogenesis of c-type cytochromes. Transiently binds heme delivered by CcmC and transfers the heme to apo-cytochromes in a process facilitated by CcmF and CcmH. This chain is Cytochrome c-type biogenesis protein CcmE, found in Psychromonas ingrahamii (strain DSM 17664 / CCUG 51855 / 37).